A 255-amino-acid polypeptide reads, in one-letter code: Complement C1q-like protein 3 (255 aa).

A signal peptide spans 1–20; that stretch reads MVLLLVILIPVLVSSAGTSA. The tract at residues 39 to 109 is disordered; that stretch reads KAPSTAATPD…GLPGPPGAPG (71 aa). The Collagen-like domain maps to 61–111; the sequence is GPKGEAGRPGKAGPRGPPGEPGPPGPVGPPGEKGEPGRQGLPGPPGAPGLN. Over residues 75–89 the composition is skewed to pro residues; it reads RGPPGEPGPPGPVGP. One can recognise a C1q domain in the interval 122–255; that stretch reads STVPKIAFYA…TFSGFIIYAD (134 aa).

Forms homooligomers. Interacts with ADGRB3. Forms heterooligomers with C1QL2 and C1QL4, when proteins are coexpressed; this interaction does not occur after secretion. Highly expressed in brain and white adipose tissue. In gonadal fat pad, expressed at lower levels in adipocytes than in the stromal vascular fraction (VSP), which contains preadipocytes, fibroblasts, endothelial cells and occasional immune cells. Expression exhibits sexually dimorphism, with higher levels in females than in males (at protein level). Tends to be up-regulated in adipose tissue from obese males, but not females. Expressed in glial cells.

It is found in the secreted. In terms of biological role, may regulate the number of excitatory synapses that are formed on hippocampus neurons. Has no effect on inhibitory synapses. Plays a role in glucose homeostasis. Via AMPK signaling pathway, stimulates glucose uptake in adipocytes, myotubes and hepatocytes and enhances insulin-stimulated glucose uptake. In a hepatoma cell line, reduces the expression of gluconeogenic enzymes G6PC1 and PCK1 and hence decreases de novo glucose production. This Mus musculus (Mouse) protein is Complement C1q-like protein 3 (C1ql3).